Consider the following 127-residue polypeptide: Ribosome-binding factor A (127 aa).

It belongs to the RbfA family. As to quaternary structure, monomer. Binds 30S ribosomal subunits, but not 50S ribosomal subunits or 70S ribosomes.

It is found in the cytoplasm. Functionally, one of several proteins that assist in the late maturation steps of the functional core of the 30S ribosomal subunit. Associates with free 30S ribosomal subunits (but not with 30S subunits that are part of 70S ribosomes or polysomes). Required for efficient processing of 16S rRNA. May interact with the 5'-terminal helix region of 16S rRNA. In Stenotrophomonas maltophilia (strain R551-3), this protein is Ribosome-binding factor A.